A 192-amino-acid polypeptide reads, in one-letter code: UPF0301 protein Bmul_2524/BMULJ_00714 (192 aa).

The protein belongs to the UPF0301 (AlgH) family.

In Burkholderia multivorans (strain ATCC 17616 / 249), this protein is UPF0301 protein Bmul_2524/BMULJ_00714.